Consider the following 297-residue polypeptide: Elongation factor Ts (297 aa).

The tract at residues 82-85 (TDFV) is involved in Mg(2+) ion dislocation from EF-Tu.

It belongs to the EF-Ts family.

It localises to the cytoplasm. In terms of biological role, associates with the EF-Tu.GDP complex and induces the exchange of GDP to GTP. It remains bound to the aminoacyl-tRNA.EF-Tu.GTP complex up to the GTP hydrolysis stage on the ribosome. This chain is Elongation factor Ts, found in Azoarcus sp. (strain BH72).